Consider the following 215-residue polypeptide: CASP-like protein 1E1 (215 aa).

The Cytoplasmic portion of the chain corresponds to Met1–Cys51. Residues Cys52–Ala72 traverse the membrane as a helical segment. Residues Asp73–Ser103 are Extracellular-facing. Residues Ala104–Ala124 traverse the membrane as a helical segment. Residues Ala125–Ser130 lie on the Cytoplasmic side of the membrane. Residues Ala131–Gly151 traverse the membrane as a helical segment. At Ala152–Ala185 the chain is on the extracellular side. The helical transmembrane segment at Ala186–Leu206 threads the bilayer. Topologically, residues Thr207 to Tyr215 are cytoplasmic.

It belongs to the Casparian strip membrane proteins (CASP) family. As to quaternary structure, homodimer and heterodimers.

The protein localises to the cell membrane. This Oryza sativa subsp. indica (Rice) protein is CASP-like protein 1E1.